The following is a 640-amino-acid chain: MSSVTVTLPDGSTLEVASGATVEDVAHEIGPGLGRDTVAGKIDHELVAKEEPISEDCEIEIVTDQSDEYLDVLRHTAAHVLAQAIRRHHPDAKLTIGPYTDEGFYYDIANVELDADDLDEIQAEAASIIDDDLDVERVEYDRADAREHYADNEFKREILDAEAAGDGPVSFYTQGDFEDLCKGPHVDSTGEIGGFEVLETSAAYWRGDEERETLTRVYGTAFPTESDLQEYLARREEAKERDHRKLGREMDLFSIPDVTGPGLPLYHPNGKTVLRELSEYVRGLNSEMGYDEVETPHLFRTELWKQSGHYDNYVDDMFLLDVNDEEYGLKPMNCPGHATIFNEGSWSYRDLPVRYFEDGKVYRKEQRGELSGLSRVWAFTIDDGHVFARADQIEAEVRRLMDTITEVLDTFDLDYEVALATRPEKSVGSDDIWEQSERQLREVLDQQGVDYDVEPGDGAFYGPKIDFGFEDALGRSWDGPTVQLDFNMPDRFDLEYTGSDNDAHQPVMIHRALYGSYERFFMVLIEHYNGRFPTWLAPEQVRILPVTDDNLGYAHRVKNELGDYRVEVEDRDWTVGKKIQQAHDDNVPYMLVVGDDEEDADAVSVRDRQEREGKGVDLAEFRAHLDSEVDGKRTEPDFLD.

Residues 1 to 63 (MSSVTVTLPD…SEDCEIEIVT (63 aa)) enclose the TGS domain. The segment at 242-533 (DHRKLGREMD…LIEHYNGRFP (292 aa)) is catalytic. Zn(2+) is bound by residues Cys-334, His-385, and His-510.

It belongs to the class-II aminoacyl-tRNA synthetase family. As to quaternary structure, homodimer. Requires Zn(2+) as cofactor.

Its subcellular location is the cytoplasm. The enzyme catalyses tRNA(Thr) + L-threonine + ATP = L-threonyl-tRNA(Thr) + AMP + diphosphate + H(+). In terms of biological role, catalyzes the attachment of threonine to tRNA(Thr) in a two-step reaction: L-threonine is first activated by ATP to form Thr-AMP and then transferred to the acceptor end of tRNA(Thr). The chain is Threonine--tRNA ligase from Halobacterium salinarum (strain ATCC 29341 / DSM 671 / R1).